Reading from the N-terminus, the 486-residue chain is Acetyl-coenzyme A carboxylase carboxyl transferase subunit beta, chloroplastic (486 aa).

Positions 224–486 (LWVQCENCYG…FQFHGFFPRP (263 aa)) constitute a CoA carboxyltransferase N-terminal domain. Residues cysteine 228, cysteine 231, cysteine 247, and cysteine 250 each coordinate Zn(2+). The C4-type zinc-finger motif lies at 228 to 250 (CENCYGLNYKKFFSSKMNICEQC).

It belongs to the AccD/PCCB family. Acetyl-CoA carboxylase is a heterohexamer composed of biotin carboxyl carrier protein, biotin carboxylase and 2 subunits each of ACCase subunit alpha and ACCase plastid-coded subunit beta (accD). Zn(2+) is required as a cofactor.

It localises to the plastid. Its subcellular location is the chloroplast stroma. The catalysed reaction is N(6)-carboxybiotinyl-L-lysyl-[protein] + acetyl-CoA = N(6)-biotinyl-L-lysyl-[protein] + malonyl-CoA. It participates in lipid metabolism; malonyl-CoA biosynthesis; malonyl-CoA from acetyl-CoA: step 1/1. Functionally, component of the acetyl coenzyme A carboxylase (ACC) complex. Biotin carboxylase (BC) catalyzes the carboxylation of biotin on its carrier protein (BCCP) and then the CO(2) group is transferred by the transcarboxylase to acetyl-CoA to form malonyl-CoA. The protein is Acetyl-coenzyme A carboxylase carboxyl transferase subunit beta, chloroplastic of Nymphaea alba (White water-lily).